The chain runs to 263 residues: Retinoic acid early transcript 1E (263 aa).

An N-terminal signal peptide occupies residues 1-30 (MRRISLTSSPVRLLLFLLLLLIALEIMVGG). The interval 31–116 (HSLCFNFTIK…DIKPQIKTSD (86 aa)) is MHC class I alpha-1 like; down-regulates the cell surface expression of KLRK1. The Extracellular portion of the chain corresponds to 31-225 (HSLCFNFTIK…IHWSSSSLPD (195 aa)). N-linked (GlcNAc...) asparagine glycans are attached at residues asparagine 36, asparagine 154, and asparagine 212. Residues 117 to 207 (PSTLQVEMFC…GHWEAMPEPT (91 aa)) form an MHC class I alpha-2 like; down-regulates the cell surface expression of KLRK1 region. A disulfide bond links cysteine 126 and cysteine 189. A helical membrane pass occupies residues 226 to 248 (RWIILGAFILLVLMGIVLICVWW). The Cytoplasmic portion of the chain corresponds to 249-263 (QNGEWQAGLWPLRTS).

This sequence belongs to the MHC class I family. As to quaternary structure, binds to KLRK1/NKG2D. (Microbial infection) Contrary to other family members, does not interact with CMV glycoprotein UL16. Predominantly expressed in the skin, but also expressed in testis and trachea. Up-regulated in tumor cells of different origins. Expression progressively decreased after treatment of tumor cells with retinoic acid.

The protein resides in the membrane. It is found in the secreted. In terms of biological role, binds and activates the KLRK1/NKG2D receptor, mediating natural killer cell cytotoxicity. This chain is Retinoic acid early transcript 1E, found in Homo sapiens (Human).